The sequence spans 407 residues: Polygalacturonase (407 aa).

Positions 1–26 (MAPHLNIVPSMFVLLLLFISASKVQS) are cleaved as a signal peptide. PbH1 repeat units follow at residues 180-206 (CKNI…HMGK) and 207-228 (SEGV…SIGD). The N-linked (GlcNAc...) asparagine glycan is linked to Asn-182. The active-site Proton donor is Asp-221. Residues Cys-223 and Cys-240 are joined by a disulfide bond. Residue His-244 is part of the active site. PbH1 repeat units follow at residues 260–281 (VEGI…RIKT) and 290–311 (VSEI…LIDQ). 4 N-linked (GlcNAc...) asparagine glycosylation sites follow: Asn-267, Asn-272, Asn-302, and Asn-331. 2 disulfides stabilise this stretch: Cys-351–Cys-357 and Cys-379–Cys-395. The PbH1 5 repeat unit spans residues 357 to 384 (CQNVELADIDIKHNGAEPATSQCLNVKP).

Belongs to the glycosyl hydrolase 28 family. Pollen.

Its subcellular location is the secreted. It is found in the cell wall. The catalysed reaction is (1,4-alpha-D-galacturonosyl)n+m + H2O = (1,4-alpha-D-galacturonosyl)n + (1,4-alpha-D-galacturonosyl)m.. In terms of biological role, may function in the depolymerization of the pectin in its walls during pollen tube elongation, or in that of the pistil during pollination. In Gossypium hirsutum (Upland cotton), this protein is Polygalacturonase (G9).